The sequence spans 392 residues: ATP phosphoribosyltransferase regulatory subunit (392 aa).

It belongs to the class-II aminoacyl-tRNA synthetase family. HisZ subfamily. Heteromultimer composed of HisG and HisZ subunits.

It localises to the cytoplasm. Its pathway is amino-acid biosynthesis; L-histidine biosynthesis; L-histidine from 5-phospho-alpha-D-ribose 1-diphosphate: step 1/9. In terms of biological role, required for the first step of histidine biosynthesis. May allow the feedback regulation of ATP phosphoribosyltransferase activity by histidine. The polypeptide is ATP phosphoribosyltransferase regulatory subunit (Geobacillus sp. (strain WCH70)).